The following is a 296-amino-acid chain: Lipoyl synthase (296 aa).

[4Fe-4S] cluster is bound by residues cysteine 37, cysteine 42, cysteine 48, cysteine 63, cysteine 67, cysteine 70, and serine 276. The Radical SAM core domain occupies 49-265 (WSKKHTTVMI…ERLAKTKGFL (217 aa)).

This sequence belongs to the radical SAM superfamily. Lipoyl synthase family. [4Fe-4S] cluster serves as cofactor.

Its subcellular location is the cytoplasm. It carries out the reaction [[Fe-S] cluster scaffold protein carrying a second [4Fe-4S](2+) cluster] + N(6)-octanoyl-L-lysyl-[protein] + 2 oxidized [2Fe-2S]-[ferredoxin] + 2 S-adenosyl-L-methionine + 4 H(+) = [[Fe-S] cluster scaffold protein] + N(6)-[(R)-dihydrolipoyl]-L-lysyl-[protein] + 4 Fe(3+) + 2 hydrogen sulfide + 2 5'-deoxyadenosine + 2 L-methionine + 2 reduced [2Fe-2S]-[ferredoxin]. The protein operates within protein modification; protein lipoylation via endogenous pathway; protein N(6)-(lipoyl)lysine from octanoyl-[acyl-carrier-protein]: step 2/2. Functionally, catalyzes the radical-mediated insertion of two sulfur atoms into the C-6 and C-8 positions of the octanoyl moiety bound to the lipoyl domains of lipoate-dependent enzymes, thereby converting the octanoylated domains into lipoylated derivatives. The sequence is that of Lipoyl synthase from Rickettsia rickettsii (strain Iowa).